The sequence spans 231 residues: tRNA (guanine-N(1)-)-methyltransferase (231 aa).

S-adenosyl-L-methionine is bound by residues Gly114 and 134–139 (IGDYVL).

Belongs to the RNA methyltransferase TrmD family. Homodimer.

It localises to the cytoplasm. It carries out the reaction guanosine(37) in tRNA + S-adenosyl-L-methionine = N(1)-methylguanosine(37) in tRNA + S-adenosyl-L-homocysteine + H(+). Specifically methylates guanosine-37 in various tRNAs. This is tRNA (guanine-N(1)-)-methyltransferase from Clostridioides difficile (strain 630) (Peptoclostridium difficile).